The chain runs to 264 residues: Thiazole synthase (264 aa).

The Schiff-base intermediate with DXP role is filled by K106. Residues G167, 193-194, and 215-216 each bind 1-deoxy-D-xylulose 5-phosphate; these read AG and NS.

The protein belongs to the ThiG family. Homotetramer. Forms heterodimers with either ThiH or ThiS.

It localises to the cytoplasm. The catalysed reaction is [ThiS sulfur-carrier protein]-C-terminal-Gly-aminoethanethioate + 2-iminoacetate + 1-deoxy-D-xylulose 5-phosphate = [ThiS sulfur-carrier protein]-C-terminal Gly-Gly + 2-[(2R,5Z)-2-carboxy-4-methylthiazol-5(2H)-ylidene]ethyl phosphate + 2 H2O + H(+). It participates in cofactor biosynthesis; thiamine diphosphate biosynthesis. Functionally, catalyzes the rearrangement of 1-deoxy-D-xylulose 5-phosphate (DXP) to produce the thiazole phosphate moiety of thiamine. Sulfur is provided by the thiocarboxylate moiety of the carrier protein ThiS. In vitro, sulfur can be provided by H(2)S. In Prochlorococcus marinus (strain AS9601), this protein is Thiazole synthase.